A 430-amino-acid chain; its full sequence is Adenylosuccinate synthetase (430 aa).

Residues 13–19 (GDEGKGK) and 41–43 (GHT) each bind GTP. The active-site Proton acceptor is Asp-14. 2 residues coordinate Mg(2+): Asp-14 and Gly-41. IMP contacts are provided by residues 14 to 17 (DEGK), 39 to 42 (NAGH), Thr-130, Arg-144, Gln-225, Thr-240, and Arg-304. Catalysis depends on His-42, which acts as the Proton donor. Residue 300–306 (ASTGRPR) participates in substrate binding. GTP-binding positions include Arg-306, 332-334 (KLD), and 414-416 (STG).

Belongs to the adenylosuccinate synthetase family. As to quaternary structure, homodimer. Mg(2+) serves as cofactor.

Its subcellular location is the cytoplasm. The enzyme catalyses IMP + L-aspartate + GTP = N(6)-(1,2-dicarboxyethyl)-AMP + GDP + phosphate + 2 H(+). The protein operates within purine metabolism; AMP biosynthesis via de novo pathway; AMP from IMP: step 1/2. In terms of biological role, plays an important role in the de novo pathway of purine nucleotide biosynthesis. Catalyzes the first committed step in the biosynthesis of AMP from IMP. This Xanthomonas oryzae pv. oryzae (strain MAFF 311018) protein is Adenylosuccinate synthetase.